A 284-amino-acid polypeptide reads, in one-letter code: 2,3,4,5-tetrahydropyridine-2,6-dicarboxylate N-succinyltransferase (284 aa).

Substrate-binding residues include Arg-111 and Asp-148.

The protein belongs to the transferase hexapeptide repeat family. As to quaternary structure, homotrimer.

Its subcellular location is the cytoplasm. The enzyme catalyses (S)-2,3,4,5-tetrahydrodipicolinate + succinyl-CoA + H2O = (S)-2-succinylamino-6-oxoheptanedioate + CoA. The protein operates within amino-acid biosynthesis; L-lysine biosynthesis via DAP pathway; LL-2,6-diaminopimelate from (S)-tetrahydrodipicolinate (succinylase route): step 1/3. This Agrobacterium fabrum (strain C58 / ATCC 33970) (Agrobacterium tumefaciens (strain C58)) protein is 2,3,4,5-tetrahydropyridine-2,6-dicarboxylate N-succinyltransferase.